Here is a 350-residue protein sequence, read N- to C-terminus: ATPase GET3 (350 aa).

An ATP-binding site is contributed by K26–T33. D57 is an active-site residue. ATP-binding residues include E243 and N270. Residues C282 and C285 each coordinate Zn(2+).

It belongs to the arsA ATPase family. Homodimer. Component of the Golgi to ER traffic (GET) complex, which is composed of GET1, GET2 and GET3. Within the complex, GET1 and GET2 form a heterotetramer which is stabilized by phosphatidylinositol binding and which binds to the GET3 homodimer. Interacts with the chloride channel protein GEF1.

The protein resides in the cytoplasm. Its subcellular location is the endoplasmic reticulum. It is found in the golgi apparatus. Functionally, ATPase required for the post-translational delivery of tail-anchored (TA) proteins to the endoplasmic reticulum. Recognizes and selectively binds the transmembrane domain of TA proteins in the cytosol. This complex then targets to the endoplasmic reticulum by membrane-bound receptors GET1 and GET2, where the tail-anchored protein is released for insertion. This process is regulated by ATP binding and hydrolysis. ATP binding drives the homodimer towards the closed dimer state, facilitating recognition of newly synthesized TA membrane proteins. ATP hydrolysis is required for insertion. Subsequently, the homodimer reverts towards the open dimer state, lowering its affinity for the GET1-GET2 receptor, and returning it to the cytosol to initiate a new round of targeting. Cooperates with the HDEL receptor ERD2 to mediate the ATP-dependent retrieval of resident ER proteins that contain a C-terminal H-D-E-L retention signal from the Golgi to the ER. Involved in low-level resistance to the oxyanions arsenite and arsenate, and in heat tolerance. This is ATPase GET3 from Candida dubliniensis (strain CD36 / ATCC MYA-646 / CBS 7987 / NCPF 3949 / NRRL Y-17841) (Yeast).